The chain runs to 184 residues: Lactoylglutathione lyase (184 aa).

A2 is modified (N-acetylalanine). An intrachain disulfide couples C19 to C20. The region spanning L31–P177 is the VOC domain. The substrate site is built by Q34 and R38. Residue Q34 participates in Zn(2+) binding. C61 and C139 are disulfide-bonded. The residue at position 88 (K88) is an N6-succinyllysine. E100 contributes to the Zn(2+) binding site. Residue N104 participates in substrate binding. A Phosphothreonine modification is found at T107. Substrate is bound by residues R123 and H127. H127 contacts Zn(2+). An S-glutathionyl cysteine; alternate modification is found at C139. K148 is subject to N6-acetyllysine; alternate. The residue at position 148 (K148) is an N6-succinyllysine; alternate. A substrate-binding site is contributed by K157–M158. Residue E173 coordinates Zn(2+). E173 acts as the Proton donor/acceptor in catalysis.

It belongs to the glyoxalase I family. As to quaternary structure, homodimer. It depends on Zn(2+) as a cofactor. Post-translationally, glutathionylation at Cys-139 inhibits enzyme activity. In terms of processing, phosphorylated at Thr-107 in the presence of CaMK2. However, this is a consensus site for phosphorylation by CK2 so phosphorylation may be mediated by CK2 rather than CaMK2. Phosphorylation is induced by TNF and suppresses the TNF-induced transcriptional activity of NF-kappa-B. Exists in a nitric oxide (NO)-modified form. The exact nature of the modification is unknown, but it suppresses the TNF-induced transcriptional activity of NF-kappa-B.

The enzyme catalyses (R)-S-lactoylglutathione = methylglyoxal + glutathione. It participates in secondary metabolite metabolism; methylglyoxal degradation; (R)-lactate from methylglyoxal: step 1/2. With respect to regulation, regulated by oxidation of Cys-139 in response to the redox state of the cell. Results in the alternative formation of cystine or glutathione-bound cysteine, the latter modification leading to reduced enzyme activity. Catalyzes the conversion of hemimercaptal, formed from methylglyoxal and glutathione, to S-lactoylglutathione. Involved in the regulation of TNF-induced transcriptional activity of NF-kappa-B. Required for normal osteoclastogenesis. The sequence is that of Lactoylglutathione lyase (GLO1) from Homo sapiens (Human).